Here is a 1015-residue protein sequence, read N- to C-terminus: DNA polymerase catalytic subunit (1015 aa).

This sequence belongs to the DNA polymerase type-B family. In terms of assembly, forms a complex with the major DNA-binding protein BALF2, the DNA polymerase processivity factor BMRF1, and the alkaline exonuclease BGLF5. Interacts with the putative helicase-primase complex composed of BBLF4, BSLF1 and BBLF2/3 proteins; these interactions may coordinate leading and lagging strand DNA synthesis at the replication fork.

It is found in the host nucleus. It catalyses the reaction DNA(n) + a 2'-deoxyribonucleoside 5'-triphosphate = DNA(n+1) + diphosphate. Replicates viral genomic DNA in the late phase of lytic infection, producing long concatemeric DNA. The replication complex is composed of six viral proteins: the DNA polymerase, processivity factor, primase, primase-associated factor, helicase, and ssDNA-binding protein. This is DNA polymerase catalytic subunit from Homo sapiens (Human).